We begin with the raw amino-acid sequence, 724 residues long: Tripartite terminase subunit 1 (724 aa).

The C3H1-type zinc finger occupies 175-203 (CAVCFEELCVTANQGEATHRRLLGCVCDH). The tract at residues 410–445 (GGDDADADGGAAGGADAGDGGVGDEDGPGAPPPADA) is disordered. Residues 419 to 430 (GAAGGADAGDGG) show a composition bias toward gly residues. Position 652 to 659 (652 to 659 (FRSVFHCG)) interacts with ATP.

The protein belongs to the herpesviridae TRM1 protein family. As to quaternary structure, associates with TRM2 and TRM3 to form the tripartite terminase complex. Interacts with portal protein.

It is found in the host nucleus. Functionally, component of the molecular motor that translocates viral genomic DNA in empty capsid during DNA packaging. Forms a tripartite terminase complex together with TRM2 and TRM3 in the host cytoplasm. Once the complex reaches the host nucleus, it interacts with the capsid portal vertex. This portal forms a ring in which genomic DNA is translocated into the capsid. TRM1 carries an endonuclease activity that plays an important role for the cleavage of concatemeric viral DNA into unit length genomes. The protein is Tripartite terminase subunit 1 of Suid herpesvirus 1 (strain Indiana-Funkhauser / Becker) (SuHV-1).